The sequence spans 324 residues: Probable 6-phosphogluconolactonase 4, chloroplastic (324 aa).

The N-terminal 63 residues, 1–63, are a transit peptide targeting the chloroplast; that stretch reads MSVSAAVAAA…PAMATDGAAA (63 aa). A disordered region spans residues 19–43; sequence ARHRSPPASRVAATSRGRPFSSGPH.

The protein belongs to the glucosamine/galactosamine-6-phosphate isomerase family. 6-phosphogluconolactonase subfamily.

It localises to the plastid. The protein resides in the chloroplast. It catalyses the reaction 6-phospho-D-glucono-1,5-lactone + H2O = 6-phospho-D-gluconate + H(+). It functions in the pathway carbohydrate degradation; pentose phosphate pathway; D-ribulose 5-phosphate from D-glucose 6-phosphate (oxidative stage): step 2/3. Hydrolysis of 6-phosphogluconolactone to 6-phosphogluconate. This is Probable 6-phosphogluconolactonase 4, chloroplastic from Oryza sativa subsp. japonica (Rice).